A 225-amino-acid chain; its full sequence is Transcriptional regulatory protein AfsQ1 (225 aa).

The 114-residue stretch at 3–116 folds into the Response regulatory domain; that stretch reads SLLLIEDDDA…VLDARIRAVL (114 aa). The residue at position 52 (Asp52) is a 4-aspartylphosphate. Positions 124 to 223 form a DNA-binding region, ompR/PhoB-type; it reads TDSASFGSLV…VRGVGYRLDP (100 aa).

Post-translationally, phosphorylated by AfsQ2.

It localises to the cytoplasm. It is found in the nucleoid. In terms of biological role, forms part of a two-component regulatory system AfsQ1/AfsQ2 involved in secondary metabolism. The sequence is that of Transcriptional regulatory protein AfsQ1 from Streptomyces coelicolor (strain ATCC BAA-471 / A3(2) / M145).